The sequence spans 146 residues: Coactosin (146 aa).

An ADF-H domain is found at 1–132; sequence MADVSSTELK…NEEELMTKVR (132 aa).

It belongs to the actin-binding proteins ADF family. Coactosin subfamily. Post-translationally, the N-terminus is blocked.

Its subcellular location is the cytoplasm. It is found in the cytoskeleton. Functionally, binds to F-actin in a calcium independent manner. Binds to the filaments along their length. The polypeptide is Coactosin (coaA) (Dictyostelium discoideum (Social amoeba)).